The following is a 1733-amino-acid chain: Probable nuclear antigen (1733 aa).

Disordered regions lie at residues 1-41, 71-394, 437-506, 520-548, 882-907, 993-1141, 1223-1242, 1348-1475, 1585-1608, and 1630-1665; these read MNLF…THFT, PHPP…EQQV, AGAG…EGAQ, APAA…EGGA, LGGG…GAAL, AGGP…EDAA, PERV…RGHA, GAGP…GRAG, SGGG…WGSG, and PRRR…RGGC. The span at 21-31 shows a compositional bias: basic residues; the sequence is DHHHQQHHHHP. A compositionally biased stretch (basic and acidic residues) spans 77-97; it reads PQDHHRPTPARDHRDPRDHLP. A compositionally biased stretch (low complexity) spans 113 to 131; that stretch reads TTTTTIKDPQHPQDPLLLP. Residues 135–147 are compositionally biased toward basic and acidic residues; the sequence is LQEEDPHLLRPTR. Residues 179–189 show a composition bias toward pro residues; sequence GGGPPSPPPRP. Residues 190-201 show a composition bias toward low complexity; the sequence is STSSSSSHQGPP. Positions 202–220 are enriched in pro residues; sequence STRPPPPQRPPPRWPPPSP. The segment covering 227–240 has biased composition (polar residues); sequence RAGSENTAQTLFSH. A compositionally biased stretch (pro residues) spans 272–299; the sequence is PPPSPPPRPPPPLPPPPPPPPPPQPPPA. The segment covering 316-326 has biased composition (basic residues); that stretch reads GGRRRGGKRRR. The segment covering 336–354 has biased composition (acidic residues); the sequence is DAEEEEDGDGDEDEDEDRA. Positions 355-364 are enriched in basic and acidic residues; the sequence is EGEGREDGGE. Composition is skewed to gly residues over residues 365–374, 454–466, and 479–494; these read GPRGAGGGAG, GAPG…GLEG, and GGDG…GLGV. The span at 495–506 shows a compositional bias: low complexity; sequence GLQQRRGAEGAQ. Positions 882 to 892 are enriched in gly residues; sequence LGGGGGGGQQR. The span at 893-907 shows a compositional bias: low complexity; sequence GSGVRSGPESEGAAL. Gly residues-rich tracts occupy residues 993-1004 and 1027-1043; these read AGGPGAGEAGGG and AGRG…LGEP. 2 stretches are compositionally biased toward basic and acidic residues: residues 1078-1087 and 1100-1112; these read GAGDEGDRVR and RVAE…RHLL. The segment covering 1116-1127 has biased composition (gly residues); that stretch reads GPEGGRGAGGRG. Over residues 1385–1407 the composition is skewed to gly residues; the sequence is GPGGLRGRGRGGRGGGGGGGGRG. Basic residues-rich tracts occupy residues 1408–1420 and 1444–1453; these read PRGR…RRWR and RGGRGGRGGR. Over residues 1454–1474 the composition is skewed to gly residues; it reads GRGGGRAPRGGGGGPGGGGRA. Gly residues predominate over residues 1652-1665; it reads RGAGRAGGGGRGGC.

This is Probable nuclear antigen from Sus scrofa (Pig).